A 184-amino-acid chain; its full sequence is GTP cyclohydrolase 1 (184 aa).

Positions 75, 78, and 146 each coordinate Zn(2+).

The protein belongs to the GTP cyclohydrolase I family. As to quaternary structure, homomer.

It carries out the reaction GTP + H2O = 7,8-dihydroneopterin 3'-triphosphate + formate + H(+). It participates in cofactor biosynthesis; 7,8-dihydroneopterin triphosphate biosynthesis; 7,8-dihydroneopterin triphosphate from GTP: step 1/1. This chain is GTP cyclohydrolase 1, found in Finegoldia magna (strain ATCC 29328 / DSM 20472 / WAL 2508) (Peptostreptococcus magnus).